A 180-amino-acid polypeptide reads, in one-letter code: UPF0303 protein PSEEN3311 (180 aa).

The protein belongs to the UPF0303 family.

The sequence is that of UPF0303 protein PSEEN3311 from Pseudomonas entomophila (strain L48).